We begin with the raw amino-acid sequence, 405 residues long: L-carnitine CoA-transferase (405 aa).

CoA is bound by residues K97 and R104. D169 acts as the Nucleophile in catalysis.

It belongs to the CoA-transferase III family. CaiB subfamily. Homodimer.

It is found in the cytoplasm. The catalysed reaction is crotonobetainyl-CoA + (R)-carnitine = crotonobetaine + (R)-carnitinyl-CoA. It carries out the reaction 4-(trimethylamino)butanoyl-CoA + (R)-carnitine = (R)-carnitinyl-CoA + 4-(trimethylamino)butanoate. The protein operates within amine and polyamine metabolism; carnitine metabolism. In terms of biological role, catalyzes the reversible transfer of the CoA moiety from gamma-butyrobetainyl-CoA to L-carnitine to generate L-carnitinyl-CoA and gamma-butyrobetaine. Is also able to catalyze the reversible transfer of the CoA moiety from gamma-butyrobetainyl-CoA or L-carnitinyl-CoA to crotonobetaine to generate crotonobetainyl-CoA. The polypeptide is L-carnitine CoA-transferase (Escherichia fergusonii (strain ATCC 35469 / DSM 13698 / CCUG 18766 / IAM 14443 / JCM 21226 / LMG 7866 / NBRC 102419 / NCTC 12128 / CDC 0568-73)).